We begin with the raw amino-acid sequence, 395 residues long: Gastric triacylglycerol lipase (395 aa).

The first 18 residues, 1–18 (MWLLLVTSVLSAFGGAHG), serve as a signal peptide directing secretion. N-linked (GlcNAc...) asparagine glycosylation occurs at Asn33. The AB hydrolase-1 domain occupies 81–376 (LQHGLIASAT…LPYNHLDFIW (296 aa)). Ser171 serves as the catalytic Nucleophile. Cys245 and Cys254 are joined by a disulfide. The N-linked (GlcNAc...) asparagine glycan is linked to Asn270. Residues Asp342 and His371 each act as charge relay system in the active site.

This sequence belongs to the AB hydrolase superfamily. Lipase family.

It localises to the secreted. It catalyses the reaction a triacylglycerol + H2O = a diacylglycerol + a fatty acid + H(+). The enzyme catalyses 1,2,3-tri-(9Z-octadecenoyl)-glycerol + H2O = 1,2-di-(9Z-octadecenoyl)-sn-glycerol + (9Z)-octadecenoate + H(+). It carries out the reaction 1,2,3-trioctanoylglycerol + H2O = 1,2-dioctanoyl-sn-glycerol + octanoate + H(+). Catalyzes the hydrolysis of triacylglycerols to yield free fatty acids, diacylglycerol, monoacylglycerol, and glycerol. Shows a preferential hydrolysis at the sn-3 position of triacylglycerol. The sequence is that of Gastric triacylglycerol lipase (Lipf) from Mus musculus (Mouse).